The chain runs to 758 residues: Deoxynucleotidyltransferase terminal-interacting protein 2 (758 aa).

The span at Met1 to Arg21 shows a compositional bias: polar residues. A disordered region spans residues Met1–Glu176. Residues Ser17, Ser133, Ser137, and Ser140 each carry the phosphoserine modification. A compositionally biased stretch (low complexity) spans Asp128 to Ser143. A compositionally biased stretch (polar residues) spans Asn155–Val172. Ser173 and Ser183 each carry phosphoserine. Lys210 participates in a covalent cross-link: Glycyl lysine isopeptide (Lys-Gly) (interchain with G-Cter in SUMO2). Ser229, Ser240, Ser248, and Ser255 each carry phosphoserine. Residues Ala231–Ser255 show a composition bias toward polar residues. Disordered stretches follow at residues Ala231–Leu277, Lys312–Ser353, Asp377–Leu480, and Asp501–Ser552. A Glycyl lysine isopeptide (Lys-Gly) (interchain with G-Cter in SUMO2) cross-link involves residue Lys317. A compositionally biased stretch (polar residues) spans Arg321 to Ser353. A phosphoserine mark is found at Ser324 and Ser330. Glycyl lysine isopeptide (Lys-Gly) (interchain with G-Cter in SUMO2) cross-links involve residues Lys345 and Lys384. Basic and acidic residues predominate over residues Asp377 to Asp387. The span at Leu431–Ser440 shows a compositional bias: polar residues. The segment covering Ser447–Ser456 has biased composition (low complexity). Residues Ser476 and Ser512 each carry the phosphoserine modification. The stretch at Ser512 to Lys541 forms a coiled coil. Residues Ala515–Leu550 are compositionally biased toward acidic residues. Positions Leu550 to Gln607 are tdBR region; mediates interaction with DNTT. Glycyl lysine isopeptide (Lys-Gly) (interchain with G-Cter in SUMO2) cross-links involve residues Lys560, Lys586, and Lys608. A Phosphothreonine modification is found at Thr612. Residues Val621–Trp647 are disordered. Lys628 is covalently cross-linked (Glycyl lysine isopeptide (Lys-Gly) (interchain with G-Cter in SUMO2)). Residues Arg630–Arg639 are compositionally biased toward basic residues. Residues Lys651, Lys660, Lys688, and Lys733 each participate in a glycyl lysine isopeptide (Lys-Gly) (interchain with G-Cter in SUMO2) cross-link.

As to quaternary structure, forms a ternary complex with DNTT and core histone; interaction with PCNA releases DNTT and H2A/H2B histones from this ternary complex. Interacts with ESR1, ESR2, PPARG and RXRA. Part of the small subunit (SSU) processome, composed of more than 70 proteins and the RNA chaperone small nucleolar RNA (snoRNA) U3.

It is found in the nucleus. The protein localises to the nucleolus. Functionally, regulates the transcriptional activity of DNTT and ESR1. May function as a chromatin remodeling protein. Part of the small subunit (SSU) processome, first precursor of the small eukaryotic ribosomal subunit. During the assembly of the SSU processome in the nucleolus, many ribosome biogenesis factors, an RNA chaperone and ribosomal proteins associate with the nascent pre-rRNA and work in concert to generate RNA folding, modifications, rearrangements and cleavage as well as targeted degradation of pre-ribosomal RNA by the RNA exosome. In Mus musculus (Mouse), this protein is Deoxynucleotidyltransferase terminal-interacting protein 2 (Dnttip2).